The primary structure comprises 64 residues: Large ribosomal subunit protein bL32 (64 aa).

Residues 1-35 (MAVQKSRVTPSRRGMRRAHDALSAKQLSTDPTTGE) form a disordered region.

The protein belongs to the bacterial ribosomal protein bL32 family.

This Stenotrophomonas maltophilia (strain R551-3) protein is Large ribosomal subunit protein bL32.